Here is a 1038-residue protein sequence, read N- to C-terminus: Isoleucine--tRNA ligase (1038 aa).

The 'HIGH' region motif lies at 48 to 58 (PTANGKPHVGH). The 'KMSKS' region motif lies at 590 to 594 (KMSKS). Position 593 (Lys593) interacts with ATP.

Belongs to the class-I aminoacyl-tRNA synthetase family. IleS type 2 subfamily. As to quaternary structure, monomer. Requires Zn(2+) as cofactor.

It is found in the cytoplasm. The enzyme catalyses tRNA(Ile) + L-isoleucine + ATP = L-isoleucyl-tRNA(Ile) + AMP + diphosphate. Functionally, catalyzes the attachment of isoleucine to tRNA(Ile). As IleRS can inadvertently accommodate and process structurally similar amino acids such as valine, to avoid such errors it has two additional distinct tRNA(Ile)-dependent editing activities. One activity is designated as 'pretransfer' editing and involves the hydrolysis of activated Val-AMP. The other activity is designated 'posttransfer' editing and involves deacylation of mischarged Val-tRNA(Ile). In Clostridium novyi (strain NT), this protein is Isoleucine--tRNA ligase.